The sequence spans 420 residues: Gamma-glutamyl phosphate reductase (420 aa).

Belongs to the gamma-glutamyl phosphate reductase family.

The protein resides in the cytoplasm. The catalysed reaction is L-glutamate 5-semialdehyde + phosphate + NADP(+) = L-glutamyl 5-phosphate + NADPH + H(+). Its pathway is amino-acid biosynthesis; L-proline biosynthesis; L-glutamate 5-semialdehyde from L-glutamate: step 2/2. Its function is as follows. Catalyzes the NADPH-dependent reduction of L-glutamate 5-phosphate into L-glutamate 5-semialdehyde and phosphate. The product spontaneously undergoes cyclization to form 1-pyrroline-5-carboxylate. This Acidiphilium cryptum (strain JF-5) protein is Gamma-glutamyl phosphate reductase.